Reading from the N-terminus, the 257-residue chain is Hydroxyacylglutathione hydrolase (257 aa).

Residues His54, His56, Asp58, His59, His113, Asp137, and His175 each contribute to the Zn(2+) site.

This sequence belongs to the metallo-beta-lactamase superfamily. Glyoxalase II family. In terms of assembly, monomer. It depends on Zn(2+) as a cofactor.

It catalyses the reaction an S-(2-hydroxyacyl)glutathione + H2O = a 2-hydroxy carboxylate + glutathione + H(+). It functions in the pathway secondary metabolite metabolism; methylglyoxal degradation; (R)-lactate from methylglyoxal: step 2/2. Functionally, thiolesterase that catalyzes the hydrolysis of S-D-lactoyl-glutathione to form glutathione and D-lactic acid. The sequence is that of Hydroxyacylglutathione hydrolase from Nostoc punctiforme (strain ATCC 29133 / PCC 73102).